A 192-amino-acid chain; its full sequence is Pyridoxal 5'-phosphate synthase subunit PdxT (192 aa).

53–55 (GES) contributes to the L-glutamine binding site. The active-site Nucleophile is C82. L-glutamine-binding positions include R108 and 134–135 (IR). Residues H170 and E172 each act as charge relay system in the active site.

This sequence belongs to the glutaminase PdxT/SNO family. As to quaternary structure, in the presence of PdxS, forms a dodecamer of heterodimers. Only shows activity in the heterodimer.

It carries out the reaction aldehydo-D-ribose 5-phosphate + D-glyceraldehyde 3-phosphate + L-glutamine = pyridoxal 5'-phosphate + L-glutamate + phosphate + 3 H2O + H(+). The catalysed reaction is L-glutamine + H2O = L-glutamate + NH4(+). It participates in cofactor biosynthesis; pyridoxal 5'-phosphate biosynthesis. Catalyzes the hydrolysis of glutamine to glutamate and ammonia as part of the biosynthesis of pyridoxal 5'-phosphate. The resulting ammonia molecule is channeled to the active site of PdxS. The chain is Pyridoxal 5'-phosphate synthase subunit PdxT from Methanosphaera stadtmanae (strain ATCC 43021 / DSM 3091 / JCM 11832 / MCB-3).